A 1889-amino-acid chain; its full sequence is Bromodomain adjacent to zinc finger domain protein 2A (1889 aa).

Disordered regions lie at residues 1–59 (MEME…NGLS), 384–433 (FGLN…SPAA), and 479–526 (TTPV…GAVA). A compositionally biased stretch (polar residues) spans 35 to 59 (TNGSPMNFPQQGKSLNGDVNVNGLS). Residues 332–726 (EGNPVISALD…ESQTPVQGQA (395 aa)) form a required for TTF1 binding region. Residues 423-433 (PAVSPTASPAA) are compositionally biased toward low complexity. Composition is skewed to polar residues over residues 479-489 (TTPVTSPQGSP) and 498-509 (QTVSPARKNVSS). Threonine 499 carries the post-translational modification Phosphothreonine. Serine 501 is modified (phosphoserine). An MBD domain is found at 538-609 (IATPEEVRLP…EHFSFSPRMP (72 aa)). Threonine 540 is subject to Phosphothreonine. Position 605 is a phosphoserine (serine 605). The interval 638 to 791 (QAITGKRGRP…ARPSCRADKT (154 aa)) is disordered. 2 DNA-binding regions (a.T hook) span residues 641 to 653 (TGKR…NEKA) and 662 to 674 (KRGR…IKMP). Positions 648–660 (RNNEKAKNKEVPK) are enriched in basic and acidic residues. Basic residues predominate over residues 661–670 (VKRGRGRPPK). Residue lysine 672 is modified to N6-acetyllysine; by KAT8. The segment covering 678–701 (NKTDNRLPKKLETQEILSEDDKAK) has biased composition (basic and acidic residues). The stretch at 686–813 (KKLETQEILS…QQAILEEMKK (128 aa)) forms a coiled coil. Basic residues predominate over residues 702–713 (MTKNKKKMRQKV). Residues 716–726 (GESQTPVQGQA) show a composition bias toward polar residues. Basic and acidic residues-rich tracts occupy residues 731 to 740 (KQDTKSLKQK) and 748 to 791 (AEKE…ADKT). Lysine 790 bears the N6-acetyllysine mark. Residues 839–904 (SRAFSDCLTI…LKAALHDPGL (66 aa)) enclose the DDT domain. Residue lysine 857 forms a Glycyl lysine isopeptide (Lys-Gly) (interchain with G-Cter in SUMO2) linkage. The tract at residues 1039 to 1063 (EETSGIEEEEEEENTTAVHGRRGRK) is disordered. Serine 1042 is subject to Phosphoserine. Over residues 1042–1052 (SGIEEEEEEEN) the composition is skewed to acidic residues. Residues lysine 1141 and lysine 1163 each participate in a glycyl lysine isopeptide (Lys-Gly) (interchain with G-Cter in SUMO2) cross-link. Disordered stretches follow at residues 1147–1247 (LMEV…GQSQ) and 1269–1397 (LSSS…GRPP). A Phosphoserine modification is found at serine 1174. Positions 1176–1188 (ARSRGRPRKPKPG) form a DNA-binding region, a.T hook 3. Composition is skewed to polar residues over residues 1190–1231 (LQPQ…QPSS), 1269–1278 (LSSSVLTPDS), and 1331–1346 (DQPT…SKPM). 3 positions are modified to phosphoserine: serine 1374, serine 1377, and serine 1383. The segment at residues 1390–1402 (PKRRGRPPSKFFK) is a DNA-binding region (a.T hook 4). Phosphoserine is present on serine 1545. Residues lysine 1662 and lysine 1695 each participate in a glycyl lysine isopeptide (Lys-Gly) (interchain with G-Cter in SUMO2) cross-link. The segment at 1662–1712 (KVTCLVCRKGDNDEFLLLCDGCDRGCHIYCHRPKMEAVPEGDWFCAVCLSQ) adopts a PHD-type zinc-finger fold. Positions 1720-1778 (QRPGFPKRGQKRKSSFPLTFPEGDSRRRMLSRSRDSPAVPRYPEDGLSPPKRRRHSMRS) are disordered. Residue serine 1733 is modified to Phosphoserine. At threonine 1738 the chain carries Phosphothreonine. Basic and acidic residues predominate over residues 1742–1754 (GDSRRRMLSRSRD). 2 positions are modified to phosphoserine: serine 1755 and serine 1767. Residues 1769 to 1778 (PKRRRHSMRS) are compositionally biased toward basic residues. Residues 1777-1881 (RSHHSDLTFC…RFFESRWEEF (105 aa)) form the Bromo domain.

The protein belongs to the WAL family. In terms of assembly, component of the NoRC-1 ISWI chromatin remodeling complex at least composed of SMARCA1 and BAZ2A/TIP5, which regulates the spacing of histone octamers on the DNA template to facilitate access to DNA. Within the NoRC-1 ISWI chromatin remodeling complex interacts with SMARCA1; the interaction is direct. Component of the NoRC-5 ISWI chromatin remodeling complex (also called the NoRC nucleolar-remodeling complex), at least composed of SMARCA5/SNF2H and BAZ2A/TIP5, which regulates the spacing of histone octamers on the DNA template to facilitate access to DNA. Within the NoRC-5 ISWI chromatin remodeling complexes interacts with SMARCA5/SNF2H; the interaction is direct. Interacts with TTF1; the interaction is required for recruitment of the NoRC-5 ISWI chromatin remodeling complex to rDNA. Interacts with HDAC1. Interacts with SIN3A. Interacts with DNMT1 and DNM3B. Interacts with BEND3 and USP21. In terms of processing, ubiquitinated. Deubiquitinated by USP21 leading to its stabilization. Post-translationally, acetylation at Lys-672 by KAT8/MOF promotes its dissociation from pRNA, affecting heterochromatin formation, nucleosome positioning and rDNA silencing. Deacetylation by SIRT1 in late S phase enhances pRNA-binding, allowing de novo DNA methylation and heterochromatin formation. Acetylation is high during S phase and declines to background levels in late S phase when the silent copies of rRNA genes are replicated.

It is found in the nucleus. The protein localises to the nucleolus. In terms of biological role, regulatory subunit of the ATP-dependent NoRC-1 and NoRC-5 ISWI chromatin remodeling complexes, which form ordered nucleosome arrays on chromatin and facilitate access to DNA during DNA-templated processes such as DNA replication, transcription, and repair. Both complexes regulate the spacing of nucleosomes along the chromatin and have the ability to slide mononucleosomes to the center of a DNA template. Directly stimulates the ATPase activity of SMARCA5 in the NoRC-5 ISWI chromatin remodeling complex. The NoRC-1 ISWI chromatin remodeling complex has a lower ATP hydrolysis rate than the NoRC-5 ISWI chromatin remodeling complex. Within the NoRC-5 ISWI chromatin remodeling complex, mediates silencing of a fraction of rDNA by recruiting histone-modifying enzymes and DNA methyltransferases, leading to heterochromatin formation and transcriptional silencing. In the complex, it plays a central role by being recruited to rDNA and by targeting chromatin modifying enzymes such as HDAC1, leading to repress RNA polymerase I transcription. Recruited to rDNA via its interaction with TTF1 and its ability to recognize and bind histone H4 acetylated on 'Lys-16' (H4K16ac), leading to deacetylation of H4K5ac, H4K8ac, H4K12ac but not H4K16ac. Specifically binds pRNAs, 150-250 nucleotide RNAs that are complementary in sequence to the rDNA promoter; pRNA-binding is required for heterochromatin formation and rDNA silencing. The chain is Bromodomain adjacent to zinc finger domain protein 2A (Baz2a) from Mus musculus (Mouse).